The primary structure comprises 175 residues: Small ribosomal subunit protein uS4 (175 aa).

Residues 105–169 (RRLQTIVYRQ…SPLADSLHPA (65 aa)) enclose the S4 RNA-binding domain.

The protein belongs to the universal ribosomal protein uS4 family. As to quaternary structure, part of the 30S ribosomal subunit. Contacts protein S5. The interaction surface between S4 and S5 is involved in control of translational fidelity.

Functionally, one of the primary rRNA binding proteins, it binds directly to 16S rRNA where it nucleates assembly of the body of the 30S subunit. Its function is as follows. With S5 and S12 plays an important role in translational accuracy. This Haloquadratum walsbyi (strain DSM 16790 / HBSQ001) protein is Small ribosomal subunit protein uS4.